A 151-amino-acid polypeptide reads, in one-letter code: Arginine regulator (151 aa).

This sequence belongs to the ArgR family.

It localises to the cytoplasm. It functions in the pathway amino-acid degradation; L-arginine degradation via ADI pathway. Regulates the transcription of the arc operon, involved in arginine catabolism. The protein is Arginine regulator (argR1) of Clostridium perfringens (strain 13 / Type A).